We begin with the raw amino-acid sequence, 212 residues long: Stringent starvation protein A homolog (212 aa).

A GST N-terminal domain is found at 9-87 (SVMTLFSNKD…YLDERFPHPP (79 aa)). A GST C-terminal domain is found at 92–212 (YPVSRAKDRL…AAPKNLMDDK (121 aa)).

Belongs to the GST superfamily. HSP26 family.

Forms an equimolar complex with the RNA polymerase holoenzyme (RNAP) but not with the core enzyme. The chain is Stringent starvation protein A homolog (sspA) from Haemophilus influenzae (strain ATCC 51907 / DSM 11121 / KW20 / Rd).